Reading from the N-terminus, the 361-residue chain is Putative F-box protein At1g33010 (361 aa).

The 47-residue stretch at glycine 4–proline 50 folds into the F-box domain. Positions serine 308–glutamine 339 are disordered.

This is Putative F-box protein At1g33010 from Arabidopsis thaliana (Mouse-ear cress).